We begin with the raw amino-acid sequence, 500 residues long: L-arabinose isomerase (500 aa).

4 residues coordinate Mn(2+): glutamate 306, glutamate 333, histidine 350, and histidine 450.

This sequence belongs to the arabinose isomerase family. As to quaternary structure, homohexamer. It depends on Mn(2+) as a cofactor.

The catalysed reaction is beta-L-arabinopyranose = L-ribulose. It functions in the pathway carbohydrate degradation; L-arabinose degradation via L-ribulose; D-xylulose 5-phosphate from L-arabinose (bacterial route): step 1/3. Catalyzes the conversion of L-arabinose to L-ribulose. The polypeptide is L-arabinose isomerase (Escherichia coli O139:H28 (strain E24377A / ETEC)).